The chain runs to 404 residues: Probable tRNA sulfurtransferase (404 aa).

Residues 61 to 166 enclose the THUMP domain; it reads QTLVTGLPKI…HDATYMMAQV (106 aa). ATP is bound by residues 184 to 185, 209 to 210, R266, G288, and Q297; these read ML and HF.

It belongs to the ThiI family.

It is found in the cytoplasm. It catalyses the reaction [ThiI sulfur-carrier protein]-S-sulfanyl-L-cysteine + a uridine in tRNA + 2 reduced [2Fe-2S]-[ferredoxin] + ATP + H(+) = [ThiI sulfur-carrier protein]-L-cysteine + a 4-thiouridine in tRNA + 2 oxidized [2Fe-2S]-[ferredoxin] + AMP + diphosphate. It carries out the reaction [ThiS sulfur-carrier protein]-C-terminal Gly-Gly-AMP + S-sulfanyl-L-cysteinyl-[cysteine desulfurase] + AH2 = [ThiS sulfur-carrier protein]-C-terminal-Gly-aminoethanethioate + L-cysteinyl-[cysteine desulfurase] + A + AMP + 2 H(+). The protein operates within cofactor biosynthesis; thiamine diphosphate biosynthesis. Functionally, catalyzes the ATP-dependent transfer of a sulfur to tRNA to produce 4-thiouridine in position 8 of tRNAs, which functions as a near-UV photosensor. Also catalyzes the transfer of sulfur to the sulfur carrier protein ThiS, forming ThiS-thiocarboxylate. This is a step in the synthesis of thiazole, in the thiamine biosynthesis pathway. The sulfur is donated as persulfide by IscS. The sequence is that of Probable tRNA sulfurtransferase from Lysinibacillus sphaericus (strain C3-41).